The primary structure comprises 460 residues: Bifunctional protein GlmU (460 aa).

The interval 1–229 (MKNYAIILAA…FDESLGVNDR (229 aa)) is pyrophosphorylase. UDP-N-acetyl-alpha-D-glucosamine contacts are provided by residues 8–11 (LAAG), Lys-22, Gln-72, and 77–78 (GT). Asp-102 is a binding site for Mg(2+). Residues Gly-139, Glu-154, Asn-169, and Asn-227 each contribute to the UDP-N-acetyl-alpha-D-glucosamine site. Asn-227 serves as a coordination point for Mg(2+). The linker stretch occupies residues 230–250 (LALAQAEVIMQERINKQHMLN). An N-acetyltransferase region spans residues 251-460 (GVTLQNPAAT…RLPHHPDQPQ (210 aa)). Residues Arg-332 and Lys-350 each coordinate UDP-N-acetyl-alpha-D-glucosamine. His-362 serves as the catalytic Proton acceptor. UDP-N-acetyl-alpha-D-glucosamine-binding residues include Tyr-365 and Asn-376. Residues Ala-379, 385-386 (NY), Ser-404, Ala-422, and Arg-439 contribute to the acetyl-CoA site.

In the N-terminal section; belongs to the N-acetylglucosamine-1-phosphate uridyltransferase family. This sequence in the C-terminal section; belongs to the transferase hexapeptide repeat family. In terms of assembly, homotrimer. Requires Mg(2+) as cofactor.

The protein resides in the cytoplasm. The enzyme catalyses alpha-D-glucosamine 1-phosphate + acetyl-CoA = N-acetyl-alpha-D-glucosamine 1-phosphate + CoA + H(+). It carries out the reaction N-acetyl-alpha-D-glucosamine 1-phosphate + UTP + H(+) = UDP-N-acetyl-alpha-D-glucosamine + diphosphate. It functions in the pathway nucleotide-sugar biosynthesis; UDP-N-acetyl-alpha-D-glucosamine biosynthesis; N-acetyl-alpha-D-glucosamine 1-phosphate from alpha-D-glucosamine 6-phosphate (route II): step 2/2. The protein operates within nucleotide-sugar biosynthesis; UDP-N-acetyl-alpha-D-glucosamine biosynthesis; UDP-N-acetyl-alpha-D-glucosamine from N-acetyl-alpha-D-glucosamine 1-phosphate: step 1/1. Its pathway is bacterial outer membrane biogenesis; LPS lipid A biosynthesis. In terms of biological role, catalyzes the last two sequential reactions in the de novo biosynthetic pathway for UDP-N-acetylglucosamine (UDP-GlcNAc). The C-terminal domain catalyzes the transfer of acetyl group from acetyl coenzyme A to glucosamine-1-phosphate (GlcN-1-P) to produce N-acetylglucosamine-1-phosphate (GlcNAc-1-P), which is converted into UDP-GlcNAc by the transfer of uridine 5-monophosphate (from uridine 5-triphosphate), a reaction catalyzed by the N-terminal domain. The protein is Bifunctional protein GlmU of Streptococcus equi subsp. zooepidemicus (strain ATCC 35246 / C74-63).